Consider the following 477-residue polypeptide: Argininosuccinate synthase (477 aa).

Residues 17–25 (AFSGGLDTS) and alanine 43 each bind ATP. Tyrosine 99 contacts L-citrulline. Residues glycine 129 and threonine 131 each coordinate ATP. 3 residues coordinate L-aspartate: threonine 131, asparagine 135, and aspartate 136. Asparagine 135 is an L-citrulline binding site. Aspartate 136 provides a ligand contact to ATP. Residues arginine 139 and serine 192 each coordinate L-citrulline. Aspartate 194 serves as a coordination point for ATP. Positions 201, 203, and 280 each coordinate L-citrulline. The disordered stretch occupies residues 450-477 (DQITENPEVQAEPEEEALDAAAMEAGTD). Residues 468–477 (DAAAMEAGTD) show a composition bias toward low complexity.

The protein belongs to the argininosuccinate synthase family. Type 2 subfamily. In terms of assembly, homotetramer.

The protein localises to the cytoplasm. It carries out the reaction L-citrulline + L-aspartate + ATP = 2-(N(omega)-L-arginino)succinate + AMP + diphosphate + H(+). It participates in amino-acid biosynthesis; L-arginine biosynthesis; L-arginine from L-ornithine and carbamoyl phosphate: step 2/3. This chain is Argininosuccinate synthase, found in Nocardioides sp. (strain ATCC BAA-499 / JS614).